A 156-amino-acid chain; its full sequence is Ribosomal RNA large subunit methyltransferase H (156 aa).

S-adenosyl-L-methionine contacts are provided by residues leucine 73, glycine 104, and 123-128; that span reads LSALTL.

This sequence belongs to the RNA methyltransferase RlmH family. In terms of assembly, homodimer.

The protein localises to the cytoplasm. The catalysed reaction is pseudouridine(1915) in 23S rRNA + S-adenosyl-L-methionine = N(3)-methylpseudouridine(1915) in 23S rRNA + S-adenosyl-L-homocysteine + H(+). Specifically methylates the pseudouridine at position 1915 (m3Psi1915) in 23S rRNA. This Psychromonas ingrahamii (strain DSM 17664 / CCUG 51855 / 37) protein is Ribosomal RNA large subunit methyltransferase H.